We begin with the raw amino-acid sequence, 243 residues long: Small ribosomal subunit protein uS3 (243 aa).

The region spanning 39 to 110 (IRGFIQKKYA…QVRINVVEIE (72 aa)) is the KH type-2 domain. The interval 215–243 (DQPLPVGASPRRKGSRRPQQFEDRSNDGK) is disordered. The segment covering 233–243 (QQFEDRSNDGK) has biased composition (basic and acidic residues).

It belongs to the universal ribosomal protein uS3 family. In terms of assembly, part of the 30S ribosomal subunit. Forms a tight complex with proteins S10 and S14.

In terms of biological role, binds the lower part of the 30S subunit head. Binds mRNA in the 70S ribosome, positioning it for translation. The protein is Small ribosomal subunit protein uS3 of Prochlorococcus marinus (strain MIT 9211).